The sequence spans 426 residues: Serine--tRNA ligase (426 aa).

231–233 is an L-serine binding site; the sequence is TSE. Residue 262–264 participates in ATP binding; sequence RSE. Glu285 contacts L-serine. 349–352 provides a ligand contact to ATP; the sequence is EISS. L-serine is bound at residue Ser385.

The protein belongs to the class-II aminoacyl-tRNA synthetase family. Type-1 seryl-tRNA synthetase subfamily. As to quaternary structure, homodimer. The tRNA molecule binds across the dimer.

The protein resides in the cytoplasm. It carries out the reaction tRNA(Ser) + L-serine + ATP = L-seryl-tRNA(Ser) + AMP + diphosphate + H(+). The enzyme catalyses tRNA(Sec) + L-serine + ATP = L-seryl-tRNA(Sec) + AMP + diphosphate + H(+). It participates in aminoacyl-tRNA biosynthesis; selenocysteinyl-tRNA(Sec) biosynthesis; L-seryl-tRNA(Sec) from L-serine and tRNA(Sec): step 1/1. Catalyzes the attachment of serine to tRNA(Ser). Is also able to aminoacylate tRNA(Sec) with serine, to form the misacylated tRNA L-seryl-tRNA(Sec), which will be further converted into selenocysteinyl-tRNA(Sec). The protein is Serine--tRNA ligase of Legionella pneumophila subsp. pneumophila (strain Philadelphia 1 / ATCC 33152 / DSM 7513).